Reading from the N-terminus, the 114-residue chain is Iron-sulfur cluster insertion protein ErpA (114 aa).

Iron-sulfur cluster-binding residues include C42, C106, and C108.

This sequence belongs to the HesB/IscA family. In terms of assembly, homodimer. Iron-sulfur cluster serves as cofactor.

Functionally, required for insertion of 4Fe-4S clusters for at least IspG. In Hamiltonella defensa subsp. Acyrthosiphon pisum (strain 5AT), this protein is Iron-sulfur cluster insertion protein ErpA.